A 968-amino-acid chain; its full sequence is Catenin delta-1 (968 aa).

The residue at position 1 (methionine 1) is an N-acetylmethionine. Residues 1 to 357 (MDDSEVESTA…ASLDSLRKGG (357 aa)) are necessary and sufficient for interaction with CCDC85B. Serine 4 carries the phosphoserine modification. Residues 10-46 (ASILASVKEQEAQFEKLTRALEEERRHVSAQLERVRV) adopt a coiled-coil conformation. Serine 47 is subject to Phosphoserine. A Phosphothreonine modification is found at threonine 59. Position 112 is a phosphotyrosine; by FYN (tyrosine 112). A Phosphoserine modification is found at serine 125. A phosphotyrosine mark is found at tyrosine 217 and tyrosine 221. The residue at position 225 (serine 225) is a Phosphoserine. Residue tyrosine 228 is modified to Phosphotyrosine. A phosphoserine mark is found at serine 230 and serine 252. Tyrosine 257 carries the phosphotyrosine modification. Phosphoserine is present on residues serine 268 and serine 269. Tyrosine 280 carries the phosphotyrosine modification. Phosphoserine; by PAK5 is present on serine 288. Tyrosine 291 bears the Phosphotyrosine mark. Positions 299–306 (MSDYGTAR) match the Nuclear localization signal (NLS) motif. Serine 300 carries the phosphoserine modification. Threonine 304 carries the phosphothreonine modification. Phosphoserine occurs at positions 320, 346, 349, and 352. ARM repeat units follow at residues 358–395 (PPPP…HLCY), 398–437 (DKVK…NISF), 441–475 (QDNK…ITGT), and 476–516 (LWNL…NEDC). Residue lysine 421 forms a Glycyl lysine isopeptide (Lys-Gly) (interchain with G-Cter in SUMO2) linkage. Lysine 517 is covalently cross-linked (Glycyl lysine isopeptide (Lys-Gly) (interchain with G-Cter in SUMO2)). Residues 521 to 528 (IEWESVLT) carry the Nuclear localization signal (NLS) motif. ARM repeat units follow at residues 534–573 (LRNV…DSDS), 583–624 (LRNL…AKKG), 653–693 (ARGY…NLCA), 700–739 (RYIR…NLAV), 740–780 (DARN…SILN), and 781–826 (TINE…ALVL). Phosphothreonine is present on residues isoleucine 566, aspartate 572, serine 587, and glutamate 593. The Nuclear localization signal (NLS) motif lies at 568-575 (QKDSDSKL). Serine 617 bears the Phosphoserine mark. The Nuclear localization signal (NLS) signature appears at 622–629 (KKGKDEWF). At serine 713 the chain carries Phosphoserine. Glutamate 788, lysine 794, and asparagine 809 each carry phosphothreonine. A Phosphoserine modification is found at serine 811. 3 positions are modified to phosphothreonine: serine 815, leucine 835, and lysine 841. Phosphoserine is present on serine 847. The interval 855–944 (NASRSQSSHS…LMQDEGQESL (90 aa)) is disordered. At alanine 856 the chain carries Phosphothreonine. Residues serine 857, serine 859, and serine 861 each carry the phosphoserine modification. Serine 862 carries the post-translational modification Phosphothreonine. A Phosphoserine modification is found at serine 864. Phosphotyrosine is present on tyrosine 865. Serine 868 carries the phosphoserine modification. Threonine 869 is modified (phosphothreonine). A compositionally biased stretch (basic and acidic residues) spans 875 to 888 (RNQKSDKKPDREEI). Serine 879 carries the phosphoserine modification. Residue lysine 882 forms a Glycyl lysine isopeptide (Lys-Gly) (interchain with G-Cter in SUMO2) linkage. Residues glutamine 889 and serine 895 each carry the phosphothreonine modification. The segment covering 889-908 (QMSNMGSNTKSLDNNYSTPN) has biased composition (polar residues). Phosphoserine is present on serine 899. Tyrosine 904 is subject to Phosphotyrosine. Phosphothreonine occurs at positions 906, 910, and 916. Basic and acidic residues predominate over residues 909–922 (ERGDHNRTLDRSGD). 2 positions are modified to phosphoserine: serine 920 and serine 943.

It belongs to the beta-catenin family. In terms of assembly, belongs to a multiprotein cell-cell adhesion complex that also contains E-cadherin/CDH1, alpha-catenin/CTNNA1, beta-catenin/CTNNB1, and gamma-catenin/JUP. Component of a cadherin:catenin adhesion complex composed of at least of CDH26, beta-catenin/CTNNB1, alpha-catenin/CTNNA1 and p120 catenin/CTNND1. Binds to the C-terminal fragment of PSEN1 and mutually competes for CDH1. Interacts with ZBTB33. Interacts with GLIS2. Interacts with FER. Interacts with NANOS1 (via N-terminal region). Interacts (via N-terminus) with GNA12; the interaction regulates CDH1-mediated cell-cell adhesion. Interacts with GNA13. Interacts with CCDC85B. Interacts with PLPP3; negatively regulates the PLPP3-mediated stabilization of CTNNB1. Interacts with DSG3; the interaction facilitates DSG3 localization and retention at cell-cell junctions. Interacts with CTNND1/p120-catenin; the interaction controls CADH5 endocytosis. Phosphorylated by FER and other protein-tyrosine kinases. Phosphorylated at Ser-288 by PAK5. Dephosphorylated by PTPRJ. As to expression, expressed in vascular endothelium. Melanocytes and melanoma cells primarily express the long isoform 1A, whereas keratinocytes express shorter isoforms, especially 3A. The shortest isoform 4A, is detected in normal keratinocytes and melanocytes, and generally lost from cells derived from squamous cell carcinomas or melanomas. The C-terminal alternatively spliced exon B is present in the p120ctn transcripts in the colon, intestine and prostate, but lost in several tumor tissues derived from these organs.

Its subcellular location is the cell junction. The protein localises to the adherens junction. It is found in the cytoplasm. It localises to the nucleus. The protein resides in the cell membrane. Functionally, key regulator of cell-cell adhesion that associates with and regulates the cell adhesion properties of both C-, E- and N-cadherins, being critical for their surface stability. Promotes localization and retention of DSG3 at cell-cell junctions, via its interaction with DSG3. Beside cell-cell adhesion, regulates gene transcription through several transcription factors including ZBTB33/Kaiso2 and GLIS2, and the activity of Rho family GTPases and downstream cytoskeletal dynamics. Implicated both in cell transformation by SRC and in ligand-induced receptor signaling through the EGF, PDGF, CSF-1 and ERBB2 receptors. The protein is Catenin delta-1 of Homo sapiens (Human).